We begin with the raw amino-acid sequence, 422 residues long: Serine hydroxymethyltransferase (422 aa).

Residues Leu119 and 123-125 contribute to the (6S)-5,6,7,8-tetrahydrofolate site; that span reads GHL. Position 228 is an N6-(pyridoxal phosphate)lysine (Lys228). (6S)-5,6,7,8-tetrahydrofolate-binding positions include Glu244 and 352–354; that span reads SPF.

This sequence belongs to the SHMT family. In terms of assembly, homodimer. Pyridoxal 5'-phosphate serves as cofactor.

It localises to the cytoplasm. It catalyses the reaction (6R)-5,10-methylene-5,6,7,8-tetrahydrofolate + glycine + H2O = (6S)-5,6,7,8-tetrahydrofolate + L-serine. Its pathway is one-carbon metabolism; tetrahydrofolate interconversion. The protein operates within amino-acid biosynthesis; glycine biosynthesis; glycine from L-serine: step 1/1. Catalyzes the reversible interconversion of serine and glycine with tetrahydrofolate (THF) serving as the one-carbon carrier. This reaction serves as the major source of one-carbon groups required for the biosynthesis of purines, thymidylate, methionine, and other important biomolecules. Also exhibits THF-independent aldolase activity toward beta-hydroxyamino acids, producing glycine and aldehydes, via a retro-aldol mechanism. In Magnetococcus marinus (strain ATCC BAA-1437 / JCM 17883 / MC-1), this protein is Serine hydroxymethyltransferase.